Consider the following 638-residue polypeptide: DNA repair protein rhp41 (638 aa).

The protein belongs to the XPC family.

Its subcellular location is the nucleus. Its function is as follows. Has a role in the nucleotide excision repair (NER) pathway. Acts in both transcription-coupled repair (TCR) which removes damage from the transcribed strand of active genes and in global genome repair (GGR) which removes damage in untranscribed DNA. Involved in the repair of UV-induced damages where it is involved in the removal of cyclobutane pyrimidine dimers (CPDs). The chain is DNA repair protein rhp41 (rhp41) from Schizosaccharomyces pombe (strain 972 / ATCC 24843) (Fission yeast).